A 138-amino-acid polypeptide reads, in one-letter code: Urease subunit beta (138 aa).

Positions 115 to 138 (RMRAAGFGDTGEAAPDDGDTESDQ) are disordered. A compositionally biased stretch (acidic residues) spans 128-138 (APDDGDTESDQ).

This sequence belongs to the urease beta subunit family. Heterotrimer of UreA (gamma), UreB (beta) and UreC (alpha) subunits. Three heterotrimers associate to form the active enzyme.

It is found in the cytoplasm. It catalyses the reaction urea + 2 H2O + H(+) = hydrogencarbonate + 2 NH4(+). It participates in nitrogen metabolism; urea degradation; CO(2) and NH(3) from urea (urease route): step 1/1. This is Urease subunit beta from Haloarcula marismortui (strain ATCC 43049 / DSM 3752 / JCM 8966 / VKM B-1809) (Halobacterium marismortui).